Reading from the N-terminus, the 364-residue chain is Alanine racemase (364 aa).

The Proton acceptor; specific for D-alanine role is filled by K34. At K34 the chain carries N6-(pyridoxal phosphate)lysine. R129 contributes to the substrate binding site. Catalysis depends on Y259, which acts as the Proton acceptor; specific for L-alanine. M307 lines the substrate pocket.

This sequence belongs to the alanine racemase family. Pyridoxal 5'-phosphate serves as cofactor.

It carries out the reaction L-alanine = D-alanine. Its pathway is amino-acid biosynthesis; D-alanine biosynthesis; D-alanine from L-alanine: step 1/1. Catalyzes the interconversion of L-alanine and D-alanine. May also act on other amino acids. This Coxiella burnetii (strain RSA 493 / Nine Mile phase I) protein is Alanine racemase (alr).